The following is an 85-amino-acid chain: Large ribosomal subunit protein bL27 (85 aa).

Residues 1–24 form a disordered region; that stretch reads MAHKKAGGSSRNGRDSHSKRLGVK.

This sequence belongs to the bacterial ribosomal protein bL27 family.

This chain is Large ribosomal subunit protein bL27, found in Nitrosomonas eutropha (strain DSM 101675 / C91 / Nm57).